Consider the following 1526-residue polypeptide: DNA topoisomerase 2-alpha (1526 aa).

At M1 the chain carries N-acetylmethionine. The disordered stretch occupies residues M1–E21. S4 is subject to Phosphoserine. A Glycyl lysine isopeptide (Lys-Gly) (interchain with G-Cter in SUMO2) cross-link involves residue K17. Residues N90, N119, and S147 to N149 each bind ATP. Residues K155 and K156 each participate in a glycyl lysine isopeptide (Lys-Gly) (interchain with G-Cter in SUMO2) cross-link. G160 to K167 serves as a coordination point for ATP. Residue K260 forms a Glycyl lysine isopeptide (Lys-Gly) (interchain with G-Cter in SUMO2) linkage. T281 is subject to Phosphothreonine. The segment at K341–K343 is interaction with DNA. Residue K351 forms a Glycyl lysine isopeptide (Lys-Gly) (interchain with G-Cter in SUMO2) linkage. Q375–K377 lines the ATP pocket. Glycyl lysine isopeptide (Lys-Gly) (interchain with G-Cter in SUMO2) cross-links involve residues K385, K396, K415, K417, K424, and K439. In terms of domain architecture, Toprim spans C454–E571. E460 contacts Mg(2+). Residues K465, K479, and K528 each participate in a glycyl lysine isopeptide (Lys-Gly) (interchain with G-Cter in SUMO2) cross-link. Mg(2+) is bound by residues D540 and D542. Glycyl lysine isopeptide (Lys-Gly) (interchain with G-Cter in SUMO2) cross-links involve residues K583, K598, K613, K621, K624, K631, K638, K654, K661, and K675. One can recognise a Topo IIA-type catalytic domain in the interval I714–L1166. The O-(5'-phospho-DNA)-tyrosine intermediate role is filled by Y804. Residues K989–S998 form an interaction with DNA region. K1074 participates in a covalent cross-link: Glycyl lysine isopeptide (Lys-Gly) (interchain with G-Cter in SUMO2). Disordered regions lie at residues W1089–G1117 and E1180–Q1217. The span at D1098–N1109 shows a compositional bias: acidic residues. A Phosphoserine; by CK1 modification is found at S1105. Glycyl lysine isopeptide (Lys-Gly) (interchain with G-Cter in SUMO2) cross-links involve residues K1191 and K1199. The residue at position 1208 (S1208) is a Phosphoserine. K1223 is covalently cross-linked (Glycyl lysine isopeptide (Lys-Gly) (interchain with G-Cter in SUMO2)). Residues K1233 to F1526 are disordered. Residue K1235 forms a Glycyl lysine isopeptide (Lys-Gly) (interchain with G-Cter in SUMO1); alternate linkage. A Glycyl lysine isopeptide (Lys-Gly) (interchain with G-Cter in SUMO2); alternate cross-link involves residue K1235. T1242 is modified (phosphothreonine). K1254 participates in a covalent cross-link: Glycyl lysine isopeptide (Lys-Gly) (interchain with G-Cter in SUMO2). The segment covering Q1255–P1265 has biased composition (basic and acidic residues). Residues K1271, K1278, and K1281 each participate in a glycyl lysine isopeptide (Lys-Gly) (interchain with G-Cter in SUMO2) cross-link. A phosphoserine mark is found at S1290, S1292, S1294, and S1297. T1322 bears the Phosphothreonine mark. Acidic residues predominate over residues L1325–F1344. Phosphoserine occurs at positions 1327 and 1332. T1349 is modified (phosphothreonine). Glycyl lysine isopeptide (Lys-Gly) (interchain with G-Cter in SUMO2) cross-links involve residues K1358, K1362, and K1368. S1369 and S1372 each carry phosphoserine. Residue K1380 forms a Glycyl lysine isopeptide (Lys-Gly) (interchain with G-Cter in SUMO2) linkage. S1382 and S1386 each carry phosphoserine. The span at S1405 to G1426 shows a compositional bias: low complexity. A Glycyl lysine isopeptide (Lys-Gly) (interchain with G-Cter in SUMO2); alternate cross-link involves residue K1417. At K1417 the chain carries N6-acetyllysine; alternate. Positions K1428–K1434 are interaction with PLSCR1. K1437 is covalently cross-linked (Glycyl lysine isopeptide (Lys-Gly) (interchain with G-Cter in SUMO2); alternate). K1437 is subject to N6-acetyllysine; alternate. Glycyl lysine isopeptide (Lys-Gly) (interchain with G-Cter in SUMO2) cross-links involve residues K1449 and K1454. 4 positions are modified to phosphoserine: S1464, S1466, S1469, and S1471. Residues K1479 and K1487 each participate in a glycyl lysine isopeptide (Lys-Gly) (interchain with G-Cter in SUMO2) cross-link. The span at S1486 to L1497 shows a compositional bias: basic and acidic residues. Position 1520 is a phosphoserine (S1520).

This sequence belongs to the type II topoisomerase family. In terms of assembly, homodimer. Interacts with COPS5. Interacts with RECQL5; this stimulates DNA decatenation. Interacts with SETMAR; stimulates the topoisomerase activity. Interacts with DHX9; this interaction occurs in a E2 enzyme UBE2I- and RNA-dependent manner, negatively regulates DHX9-mediated double-stranded DNA and RNA duplex helicase activity and stimulates TOP2A-mediated supercoiled DNA relaxation activity. Interacts with HNRNPU (via C-terminus); this interaction protects the topoisomerase TOP2A from degradation and positively regulates the relaxation of supercoiled DNA in a RNA-dependent manner. Interacts with MCM3AP. Interacts with ERCC6. Interacts with PLSCR1. Interacts with GCNA; this interaction allows the resolution of topoisomerase II (TOP2A) DNA-protein cross-links. Interacts with POL1RA/RPA1 (via dock II) and UBTF in the context of Pol I complex; may assist Pol I transcription initiation by releasing supercoils occurring during DNA unwinding. Interacts with TPRN; TPRN interacts with a number of DNA damage response proteins, is recruited to sites of DNA damage and may play a role in DNA damage repair. Mg(2+) serves as cofactor. Requires Mn(2+) as cofactor. The cofactor is Ca(2+). Post-translationally, phosphorylation has no effect on catalytic activity. However, phosphorylation at Ser-1105 by CSNK1D/CK1 promotes DNA cleavable complex formation.

The protein localises to the cytoplasm. Its subcellular location is the nucleus. The protein resides in the nucleoplasm. It localises to the nucleolus. The catalysed reaction is ATP-dependent breakage, passage and rejoining of double-stranded DNA.. Key decatenating enzyme that alters DNA topology by binding to two double-stranded DNA molecules, generating a double-stranded break in one of the strands, passing the intact strand through the broken strand, and religating the broken strand. May play a role in regulating the period length of BMAL1 transcriptional oscillation. The polypeptide is DNA topoisomerase 2-alpha (TOP2A) (Cricetulus griseus (Chinese hamster)).